A 118-amino-acid polypeptide reads, in one-letter code: V-type proton ATPase subunit G 3 (118 aa).

Positions S3–D54 form a coiled coil. The interval K19–E39 is disordered.

This sequence belongs to the V-ATPase G subunit family. In terms of assembly, V-ATPase is a heteromultimeric enzyme made up of two complexes: the ATP-hydrolytic V1 complex and the proton translocation V0 complex. The V1 complex consists of three catalytic AB heterodimers that form a heterohexamer, three peripheral stalks each consisting of EG heterodimers, one central rotor including subunits D and F, and the regulatory subunits C and H. The proton translocation complex V0 consists of the proton transport subunit a, a ring of proteolipid subunits c9c'', rotary subunit d, subunits e and f, and two accessory subunits.

In terms of biological role, subunit of the V1 complex of vacuolar(H+)-ATPase (V-ATPase), a multisubunit enzyme composed of a peripheral complex (V1) that hydrolyzes ATP and a membrane integral complex (V0) that translocates protons. V-ATPase is responsible for acidifying and maintaining the pH of intracellular compartments and in some cell types, is targeted to the plasma membrane, where it is responsible for acidifying the extracellular environment. The chain is V-type proton ATPase subunit G 3 (atp6v1g3) from Xenopus laevis (African clawed frog).